The primary structure comprises 422 residues: MNEQTRISLERAAELKSKIDDYIQARKTINRGLEKEEEINKRKQKILSILNGTEEDWNNYKWQLSNRITDVDTLSKIITLTKKEKEYIKEVGTQFRWAISPYYLSLIDPEDICDPIKLLSIPTHIELEDEQEDLDPMGEEYTNPAGCITRRYPDRLIINVTNECAMYCRHCQRRRNIGQQDSHKSKAIIQESIDYIRENEEIRDVLVTGGDALTLKDDYLEWILSQLKEIPHVDYVRLGTRTLVTMPQRITDEFCNMLKKYHPVYINTHFNHPMEITKESKEACEKLANAGVPLGNQAVLLNGINNDKFVMRCLNQELLKIRVKPYYIFQSKHVKGTKHFNTSVDDGLEIMEYLRGYTSGMAIPTYIVNAPKGGGKTPLLPQYLVSKGTDYVMLRTWEGKVIKMEDEPAVDIKKLIKEQAQD.

Positions R150 to P371 constitute a Radical SAM core domain. The [4Fe-4S] cluster site is built by C164, C168, and C171. K376 bears the N6-(pyridoxal phosphate)lysine mark.

Belongs to the radical SAM superfamily. It depends on pyridoxal 5'-phosphate as a cofactor. Requires [4Fe-4S] cluster as cofactor.

The enzyme catalyses L-glutamate = 3-aminopentanedioate. In terms of biological role, catalyzes the interconversion of L-glutamate and L-beta-glutamate. Does not have L-lysine 2,3-aminomutase activity. This Clostridioides difficile (strain 630) (Peptoclostridium difficile) protein is Glutamate 2,3-aminomutase (eam).